Here is a 390-residue protein sequence, read N- to C-terminus: Anhydro-N-acetylmuramic acid kinase (390 aa).

Residue 9-16 (GTSLDGID) coordinates ATP.

It belongs to the anhydro-N-acetylmuramic acid kinase family.

It carries out the reaction 1,6-anhydro-N-acetyl-beta-muramate + ATP + H2O = N-acetyl-D-muramate 6-phosphate + ADP + H(+). It participates in amino-sugar metabolism; 1,6-anhydro-N-acetylmuramate degradation. It functions in the pathway cell wall biogenesis; peptidoglycan recycling. Functionally, catalyzes the specific phosphorylation of 1,6-anhydro-N-acetylmuramic acid (anhMurNAc) with the simultaneous cleavage of the 1,6-anhydro ring, generating MurNAc-6-P. Is required for the utilization of anhMurNAc either imported from the medium or derived from its own cell wall murein, and thus plays a role in cell wall recycling. This Bacillus cereus (strain B4264) protein is Anhydro-N-acetylmuramic acid kinase.